Consider the following 335-residue polypeptide: Anthranilate phosphoribosyltransferase (335 aa).

Residues G80, 83–84 (GD), T88, 90–93 (NIST), 108–116 (KHGNRAVSS), and S120 contribute to the 5-phospho-alpha-D-ribose 1-diphosphate site. G80 is a binding site for anthranilate. A Mg(2+)-binding site is contributed by S92. N111 is an anthranilate binding site. Position 166 (R166) interacts with anthranilate. Positions 225 and 226 each coordinate Mg(2+).

This sequence belongs to the anthranilate phosphoribosyltransferase family. As to quaternary structure, homodimer. The cofactor is Mg(2+).

The enzyme catalyses N-(5-phospho-beta-D-ribosyl)anthranilate + diphosphate = 5-phospho-alpha-D-ribose 1-diphosphate + anthranilate. The protein operates within amino-acid biosynthesis; L-tryptophan biosynthesis; L-tryptophan from chorismate: step 2/5. Catalyzes the transfer of the phosphoribosyl group of 5-phosphorylribose-1-pyrophosphate (PRPP) to anthranilate to yield N-(5'-phosphoribosyl)-anthranilate (PRA). The sequence is that of Anthranilate phosphoribosyltransferase from Clostridium kluyveri (strain NBRC 12016).